The sequence spans 75 residues: MARYFRRRKFCRFTAENVVEIDYKDIATLKNYITESGKIVPSRITGTRAKYQRQLARAIKRARYLALLPYTDNHQ.

Belongs to the bacterial ribosomal protein bS18 family. As to quaternary structure, part of the 30S ribosomal subunit. Forms a tight heterodimer with protein bS6.

Binds as a heterodimer with protein bS6 to the central domain of the 16S rRNA, where it helps stabilize the platform of the 30S subunit. The polypeptide is Small ribosomal subunit protein bS18 (Histophilus somni (strain 129Pt) (Haemophilus somnus)).